A 424-amino-acid polypeptide reads, in one-letter code: Hydrolase ORFZ (424 aa).

The active-site Nucleophile is serine 243.

The protein belongs to the AB hydrolase superfamily. FUS2 hydrolase family. As to quaternary structure, homodimer.

Its pathway is secondary metabolite biosynthesis. Hydrolyase; part of the gene cluster that mediates the biosynthesis of a tyrosine-derived cytochalasan acting as a fungal signal recognized by resistant rice plants and leads to avirulence in Pi33 resistant rice cultivars. The first step in the pathway is catalyzed by the hybrid PKS-NRPS ACE1, assisted by the enoyl reductase RAP1, that are responsible for fusion of the tyrosine precursor and the polyketide backbone. The polyketide synthase module (PKS) of ACE1 is responsible for the synthesis of the polyketide backbone and the downstream nonribosomal peptide synthetase (NRPS) amidates the carboxyl end of the polyketide with the tyrosine precursor. Because ACE1 lacks a designated enoylreductase (ER) domain, the required activity is provided the enoyl reductase RAP1. Reduction by the hydrolyase ORFZ, followed by dehydration and intra-molecular Diels-Alder cyclization by the Diels-Alderase ORF3 then yield the required isoindolone-fused macrocycle. A number of oxidative steps catalyzed by the tailoring enzymes identified within the cluster, including cytochrome P450 monooxygenases CYP1 to CYP4, the FAD-linked oxidoreductase OXR2 and the short-chain dehydrogenase/reductase OXR1, are further required to afford the final cytochalasans that confer avirulence and which have still to be identified. The monooxygenase CYP1 has been shown to be a site-selective C-18 hydroxylase whereas the function of CYP3 is the site-selective epoxidation of the C-6/C-7 olefin that is present in some intermediate compounds. Finally, SYN2 and RAP2 are not required for avirulence in Pi33 resistant rice cultivars. The sequence is that of Hydrolase ORFZ from Pyricularia oryzae (strain 70-15 / ATCC MYA-4617 / FGSC 8958) (Rice blast fungus).